A 228-amino-acid chain; its full sequence is Deoxyribose-phosphate aldolase (228 aa).

Residue Asp-93 is the Proton donor/acceptor of the active site. Residue Lys-159 is the Schiff-base intermediate with acetaldehyde of the active site. Lys-188 serves as the catalytic Proton donor/acceptor.

Belongs to the DeoC/FbaB aldolase family. DeoC type 1 subfamily.

It is found in the cytoplasm. The catalysed reaction is 2-deoxy-D-ribose 5-phosphate = D-glyceraldehyde 3-phosphate + acetaldehyde. It participates in carbohydrate degradation; 2-deoxy-D-ribose 1-phosphate degradation; D-glyceraldehyde 3-phosphate and acetaldehyde from 2-deoxy-alpha-D-ribose 1-phosphate: step 2/2. Its function is as follows. Catalyzes a reversible aldol reaction between acetaldehyde and D-glyceraldehyde 3-phosphate to generate 2-deoxy-D-ribose 5-phosphate. In Carboxydothermus hydrogenoformans (strain ATCC BAA-161 / DSM 6008 / Z-2901), this protein is Deoxyribose-phosphate aldolase.